Reading from the N-terminus, the 522-residue chain is MNRTFSLRRKVKKSEISTPSNFEHRIHAGFDARSGTYTGLPKQWQALLGPPRSISRPKPMVDPSCITPVDVAELKTVIRGPSSSFRYNSPLPFGMTNSPMPSVARSNSLRISATASPVVNVSSARHSFRPTLPPVSQRGYPFNDPSYAPLPLRNQKPPMSTTFGVEKPHQYQQIITIVAPSRTTTPQLQPKSPSTPQAMRQQPKCTEGVSDEEFRNALKFVVDGTDPRSDLTDYKQIGEGSTGVVEAAYKISTKQIVAVKRMNLRKQQRRELLFNEVSILRQYQHPNIVRFFSSHLVDDELWVVMEFMEGGSLTDIVTATRMTEPQIATISRQVLGALDFLHARKVIHRDIKSDSILLKRDGTVKLTDFGFCGQLSEEVPRRRSLVGTPYWTAAEVIAREPYDTRADIWSFGIMLIEMVEGEPPFFNDQPFQAMKRIRDEHEARFSRHAKVSVELSELLSHCIVKDVNKRWPAKDLLRHPFFAKAQHSSSIAPLLLQLQGNTINGNNPPTHHHSSQITTVIQ.

A CRIB domain is found at 16 to 29 (ISTPSNFEHRIHAG). The span at 183–204 (TTTPQLQPKSPSTPQAMRQQPK) shows a compositional bias: polar residues. The tract at residues 183–208 (TTTPQLQPKSPSTPQAMRQQPKCTEG) is disordered. A Protein kinase domain is found at 231-482 (LTDYKQIGEG…AKDLLRHPFF (252 aa)). ATP is bound by residues 237 to 245 (IGEGSTGVV) and Lys-260. The active-site Proton acceptor is Asp-350.

Belongs to the protein kinase superfamily. STE Ser/Thr protein kinase family. STE20 subfamily. It depends on Mg(2+) as a cofactor. Requires Mn(2+) as cofactor. Expressed in pharynx, vulva and spermatheca. Unlike other p21-activated kinases, expression is not detected in neurons.

The catalysed reaction is L-seryl-[protein] + ATP = O-phospho-L-seryl-[protein] + ADP + H(+). It catalyses the reaction L-threonyl-[protein] + ATP = O-phospho-L-threonyl-[protein] + ADP + H(+). Serine/threonine-protein kinase which plays a redundant role with pak-1 in embryogenesis but, in contrast to pak-1, is not involved in commissural axon guidance of ventral cord motoneurons or in distal tip cell (DTC) migration. This chain is Serine/threonine-protein kinase pak-2, found in Caenorhabditis elegans.